We begin with the raw amino-acid sequence, 371 residues long: MSL complex subunit 3B (371 aa).

2 disordered regions span residues 1 to 44 (MATL…READ) and 160 to 229 (EERA…SPQA). The span at 8–44 (PKDDGEGKDEGGSDRGDGDPKPKGKKEVEAHTRREAD) shows a compositional bias: basic and acidic residues. One can recognise an MRG domain in the interval 44–367 (DERAVRIPIP…CEAHYSSKNP (324 aa)). Over residues 206-216 (APRRSTRHSTH) the composition is skewed to basic residues.

It localises to the nucleus. In terms of biological role, probable non-catalytic component of the MSL histone acetyltransferase complex, a multiprotein complex that mediates the majority of histone H4 acetylation at 'Lys-16' (H4K16ac), an epigenetic mark that prevents chromatin compaction. This is MSL complex subunit 3B from Rattus norvegicus (Rat).